The following is a 1390-amino-acid chain: MVKEQFRETDVAKKISHICFGMKSAEEMRQQAHIQVVSKNLYSQDNNHSPLLYGVLDHRMGTSEKDRPCETCGKNLADCLGHYGYIDLELPCFHVGYFRAVIGILQMICKTCCHIMLSQEEKKQFLDYLKRPGLTYLQKRGLKKKISDKCRKKNTCHHCGAFNGTVKKCGLLKIIHEKYKTNKKVVDPIVSSFLQSFETAIEHNKEVEPLLGKAQENLNPLVVLNLFKRIPAEDIPLLLMNPEAGKPSDLILTRLLVPPLCIRPSVVSDLKSGTNEDDLTMKLTEIIFLNDVIKKHRISGAKTQMIMEDWDFLQLQCALYINSELSGIPLNMAPKKWTRGFVQRLKGKQGRFRGNLSGKRVDFSGRTVISPDPNLRIDEVAVPVHVAKILTFPEKVNKANINFLRKLVRNGPEVHPGANFIQQRHTQMKRFLKYGNREKMAQELKFGDIVERHLIDGDVVLFNRQPSLHKLSIMAHLARVKPHRTFRFNECVCTPYNADFDGDEMNLHLPQTEEAKAEALVLMGTKANLVTPRNGEPLIAAIQDFLTGAYLLTLKDTFFDRAKACQIIASILVGKDEKIKVRLPPPTILKPVTLWTGKQIFSVILRPSDDNPVRANLRTKGKQYCGRGEDLCVNDSYVTIQNSELMSGSMDKGTLGSGSKNNIFYILLRDWGQNEAADAMSRLARLAPVYLSNRGFSIGIGDVTPGQGLLKAKYELLNAGYKKCDEYIEALNTGKLQQQPGCTAEETLEALILKELSVIRDHAGSACLRELDKSNSPLTMALCGSKGSFINISQMIACVGQQAISGSRVPDGFENRSLPHFEKHSKLPAAKGFVANSFYSGLTPTEFFFHTMAGREGLVDTAVKTAETGYMQRRLVKSLEDLCSQYDLTVRSSTGDIIQFIYGGDGLDPAAMEGKDEPLEFKRVLDNIKAVFPCRSEPALSKNELLLSAESIMKKNEFLCCQDSFLQEIKKFIKEVSEKIKKTRDKYGINDNGTTEPRVLYQLDRITPTQIEKFLETCRDKYMRAQMEPGSAVGALCAQSIGEPGTQMTLKTFHFAGVASMNITLGVPRIKEIINASKAISTPIITAQLDKDDDADYARLVKGRIEKTLLGEISEYIEEVFLPDDCFILVKLSLERIRLLRLEVNAETVRYSICMSKLRVKPGDVAVHGEAVVCVTPRENSKSSMYYVLQFLKEDLPKVVVQGIPEVSRAVIHIDEQSGKEKYKLLVEGDNLRAVMATHGVKGTRTTSNNTYEVEKTLGIEAARTTIINEIQYTMVNHGMSIDRRHVMLLSDLMTYKGEVLGITRFGLAKMKESVLMLASFEKTADHLFDAAYFGQKDSVCGVSECIIMGIPMNIGTGLFKLLHKANRDPSPPRRPLIFDTNEFHIPLVT.

Positions 69, 72, 79, 82, 109, and 112 each coordinate Zn(2+). Lysine 144 contributes to the DNA binding site. 2 residues coordinate Zn(2+): cysteine 156 and cysteine 159. 6 residues coordinate DNA: lysine 167, serine 326, lysine 348, arginine 353, arginine 360, and arginine 366. Residue lysine 445 is modified to N6-acetyllysine. Arginine 464 lines the RNA pocket. Positions 499, 501, and 503 each coordinate Mg(2+). Residue aspartate 503 participates in RNA binding. The bridging helix stretch occupies residues 844-856 (PTEFFFHTMAGRE). 3 residues coordinate DNA: arginine 1159, arginine 1305, and lysine 1323.

It belongs to the RNA polymerase beta' chain family. As to quaternary structure, component of the RNA polymerase III (Pol III) complex consisting of 17 subunits: a ten-subunit catalytic core composed of POLR3A/RPC1, POLR3B/RPC2, POLR1C/RPAC1, POLR1D/RPAC2, POLR3K/RPC10, POLR2E/RPABC1, POLR2F/RPABC2, POLR2H/RPABC3, POLR2K/RPABC4 and POLR2L/RPABC5; a mobile stalk composed of two subunits POLR3H/RPC8 and CRCP/RPC9, protruding from the core and functioning primarily in transcription initiation; and additional subunits homologous to general transcription factors of the RNA polymerase II machinery, POLR3C/RPC3-POLR3F/RPC6-POLR3G/RPC7 heterotrimer required for transcription initiation and POLR3D/RPC4-POLR3E/RPC5 heterodimer involved in both transcription initiation and termination. As part of the RNA polymerase III complex, interacts with PKP2. Requires Mg(2+) as cofactor.

It is found in the nucleus. It localises to the cytoplasm. The protein resides in the cytosol. It carries out the reaction RNA(n) + a ribonucleoside 5'-triphosphate = RNA(n+1) + diphosphate. In terms of biological role, catalytic core component of RNA polymerase III (Pol III), a DNA-dependent RNA polymerase which synthesizes small non-coding RNAs using the four ribonucleoside triphosphates as substrates. Synthesizes 5S rRNA, snRNAs, tRNAs and miRNAs from at least 500 distinct genomic loci. Pol III-mediated transcription cycle proceeds through transcription initiation, transcription elongation and transcription termination stages. During transcription initiation, Pol III is recruited to DNA promoters type I, II or III with the help of general transcription factors and other specific initiation factors. Once the polymerase has escaped from the promoter it enters the elongation phase during which RNA is actively polymerized, based on complementarity with the template DNA strand. Transcription termination involves the release of the RNA transcript and polymerase from the DNA. Forms Pol III active center together with the second largest subunit POLR3B/RPC2. Appends one nucleotide at a time to the 3' end of the nascent RNA, with POLR3A/RPC1 contributing a Mg(2+)-coordinating DxDGD motif, and POLR3B/RPC2 participating in the coordination of a second Mg(2+) ion and providing lysine residues believed to facilitate Watson-Crick base pairing between the incoming nucleotide and template base. Typically, Mg(2+) ions direct a 5' nucleoside triphosphate to form a phosphodiester bond with the 3' hydroxyl of the preceding nucleotide of the nascent RNA, with the elimination of pyrophosphate. Pol III plays a key role in sensing and limiting infection by intracellular bacteria and DNA viruses. Acts as a nuclear and cytosolic DNA sensor involved in innate immune response. Can sense non-self dsDNA that serves as template for transcription into dsRNA. The non-self RNA polymerase III transcripts, such as Epstein-Barr virus-encoded RNAs (EBERs) induce type I interferon and NF-kappa-B through the RIG-I pathway. The polypeptide is DNA-directed RNA polymerase III subunit RPC1 (Bos taurus (Bovine)).